The primary structure comprises 421 residues: UDP-N-acetylglucosamine 1-carboxyvinyltransferase (421 aa).

Residue 22–23 (KN) coordinates phosphoenolpyruvate. Residue Arg-93 coordinates UDP-N-acetyl-alpha-D-glucosamine. Residue Cys-117 is the Proton donor of the active site. Cys-117 bears the 2-(S-cysteinyl)pyruvic acid O-phosphothioketal mark. Residues 122–126 (RPVDL), Asp-308, and Ile-330 contribute to the UDP-N-acetyl-alpha-D-glucosamine site.

It belongs to the EPSP synthase family. MurA subfamily.

Its subcellular location is the cytoplasm. It carries out the reaction phosphoenolpyruvate + UDP-N-acetyl-alpha-D-glucosamine = UDP-N-acetyl-3-O-(1-carboxyvinyl)-alpha-D-glucosamine + phosphate. Its pathway is cell wall biogenesis; peptidoglycan biosynthesis. Functionally, cell wall formation. Adds enolpyruvyl to UDP-N-acetylglucosamine. This is UDP-N-acetylglucosamine 1-carboxyvinyltransferase from Pseudomonas putida (strain W619).